We begin with the raw amino-acid sequence, 549 residues long: Antagonist of mitotic exit network protein 1 (549 aa).

Positions 1–11 (MKLERVSSNGS) are enriched in polar residues. The tract at residues 1–39 (MKLERVSSNGSFKRGRDIQSLESPCTRPLKKMSPSPSFT) is disordered.

Belongs to the AMN1 family. As to quaternary structure, interacts with TEM1.

Its subcellular location is the cytoplasm. It is found in the nucleus. Negative regulator of the mitotic exit network (MEN), required for multiple cell cycle checkpoints. Acts in the daughter cell to inhibit the mitotic exit pathway once MEN has executed its function. Through its binding ability to TEM1, interferes with the TEM1-CDC5 association, required for CDC5 kinase activation and MEN activation. Required for daughter cell separation and chromosome stability. Involved in copper sensitivity. The polypeptide is Antagonist of mitotic exit network protein 1 (AMN1) (Saccharomyces cerevisiae (strain ATCC 204508 / S288c) (Baker's yeast)).